Reading from the N-terminus, the 88-residue chain is Small ribosomal subunit protein uS17 (88 aa).

Belongs to the universal ribosomal protein uS17 family. In terms of assembly, part of the 30S ribosomal subunit.

In terms of biological role, one of the primary rRNA binding proteins, it binds specifically to the 5'-end of 16S ribosomal RNA. In Prochlorococcus marinus subsp. pastoris (strain CCMP1986 / NIES-2087 / MED4), this protein is Small ribosomal subunit protein uS17.